The sequence spans 519 residues: Molybdate transporter 1 (519 aa).

Helical transmembrane passes span Leu98–Ile118, Leu164–Leu184, Ala370–Cys390, Ile412–Leu432, Phe436–Val456, Gly464–Gly484, and Phe485–Ala505.

It belongs to the SLC26A/SulP transporter (TC 2.A.53) family.

It is found in the membrane. Its activity is regulated as follows. 60% inhibition by 20 uM tungstate or by lack of glucose in the medium, but no inhibition by sulfate. Its function is as follows. High affinity molybdate transporter. Acts through an energy-dependent process. The polypeptide is Molybdate transporter 1 (MOT1) (Chlamydomonas reinhardtii (Chlamydomonas smithii)).